A 548-amino-acid polypeptide reads, in one-letter code: Probable sucrose-6-phosphate hydrolase (548 aa).

Substrate contacts are provided by residues 105–108, glutamine 124, 167–168, 228–229, and glutamate 283; these read LLND, FS, and RD. Aspartate 108 is an active-site residue.

It belongs to the glycosyl hydrolase 32 family.

The protein localises to the cytoplasm. It carries out the reaction Hydrolysis of terminal non-reducing beta-D-fructofuranoside residues in beta-D-fructofuranosides.. Its pathway is glycan biosynthesis; sucrose metabolism. Its function is as follows. Enables the bacterium to metabolize sucrose as a sole carbon source. This is Probable sucrose-6-phosphate hydrolase from Vibrio cholerae serotype O1 (strain ATCC 39315 / El Tor Inaba N16961).